Reading from the N-terminus, the 464-residue chain is Phospho-2-dehydro-3-deoxyheptonate aldolase AroG (464 aa).

Residue Cys-87 coordinates Mn(2+). Phosphoenolpyruvate contacts are provided by residues Arg-126, 285–286 (ER), Lys-308, and Arg-339. Mn(2+) contacts are provided by His-371, Glu-413, and Asp-443.

Belongs to the class-II DAHP synthase family. In terms of assembly, homodimer. Probably interacts with MSMEG_5536. It depends on Mn(2+) as a cofactor. The cofactor is Co(2+). Cd(2+) is required as a cofactor.

The enzyme catalyses D-erythrose 4-phosphate + phosphoenolpyruvate + H2O = 7-phospho-2-dehydro-3-deoxy-D-arabino-heptonate + phosphate. It functions in the pathway metabolic intermediate biosynthesis; chorismate biosynthesis; chorismate from D-erythrose 4-phosphate and phosphoenolpyruvate: step 1/7. Its function is as follows. Catalyzes an aldol-like condensation reaction between phosphoenolpyruvate (PEP) and D-erythrose 4-phosphate (E4P) to generate 3-deoxy-D-arabino-heptulosonate 7-phosphate (DAH7P) and inorganic phosphate. This chain is Phospho-2-dehydro-3-deoxyheptonate aldolase AroG (aroG), found in Mycolicibacterium smegmatis (strain ATCC 700084 / mc(2)155) (Mycobacterium smegmatis).